We begin with the raw amino-acid sequence, 207 residues long: Large ribosomal subunit protein uL4 (207 aa).

The disordered stretch occupies residues 54-74 (RSDVRGGGKKPYRQKGTGNAR).

The protein belongs to the universal ribosomal protein uL4 family. In terms of assembly, part of the 50S ribosomal subunit.

Its function is as follows. One of the primary rRNA binding proteins, this protein initially binds near the 5'-end of the 23S rRNA. It is important during the early stages of 50S assembly. It makes multiple contacts with different domains of the 23S rRNA in the assembled 50S subunit and ribosome. Functionally, forms part of the polypeptide exit tunnel. In Magnetococcus marinus (strain ATCC BAA-1437 / JCM 17883 / MC-1), this protein is Large ribosomal subunit protein uL4.